The sequence spans 569 residues: Vacuolar protein sorting-associated protein 45 homolog (569 aa).

The protein belongs to the STXBP/unc-18/SEC1 family. As to quaternary structure, interacts with both SYP41 or SYP42 and VTI12, but in different domains of the trans-Golgi network. Does not interact on the pervacuolar compartment with VTI11, SYP21 or SYP22, or on the cis-Golgi with SYP31. Interacts at the trans-Golgi network (TGN) with the SYP41/SYP61/VTI12 SNARE complex. As to expression, highly expressed in roots, lower expression in leaves, stems and flowers.

It localises to the golgi apparatus. The protein resides in the trans-Golgi network membrane. It is found in the early endosome. Involved in the protein transport to the vacuole, probably at the level of vesicle fusion at the trans-Golgi network (TGN) and not in transport from the TGN to the prevacuolar compartment, by promoting the recycling of vacuolar sorting receptors back to the TGN. Involved in early endosomal vesicle trafficking, particularly at the trans-Golgi-network/early endosome (TGN/EE) thus residing in early endocytic route. Together with BIG5/BEN1 required for polar PIN-FORMED (PIN) proteins localization, for their dynamic repolarization, and consequently for auxin activity gradient formation and auxin-related developmental processes (e.g. embryonic patterning, organogenesis and vasculature venation patterning). Necessary for pollen germination and for cell expansion. Binds syntaxins. This Arabidopsis thaliana (Mouse-ear cress) protein is Vacuolar protein sorting-associated protein 45 homolog.